A 62-amino-acid chain; its full sequence is Metallothionein-like protein 3A (62 aa).

Belongs to the metallothionein superfamily. Type 15 family.

In terms of biological role, metallothioneins have a high content of cysteine residues that bind various heavy metals. The chain is Metallothionein-like protein 3A (MT3A) from Oryza sativa subsp. indica (Rice).